Consider the following 275-residue polypeptide: MPIIKCNPTSPGRRHVTKLVNHDLYKGNPFSSLLSNKINNRSGGRNNYGRITVRHIGGGHKKRYRIIDFKRNKDGISAVIKRLEYDPNRSANIALLSYRDGEYRYILAPKDVKIGDFISSGANVPIKPGNALPMSNIPIGSIIHNVEMKPGKGGQLARSAGSYIQIVARDGEYMILRLRSGEIRKIRCECRATVGEVGNAEHMLRMLGKAGANRWRGNRPTVRGTAMNPIDHPHGGGEGKNFGKHPVSPWGIQTKGKKTRSNKRTNKFILSHRNK.

A disordered region spans residues 214-275; sequence RWRGNRPTVR…NKFILSHRNK (62 aa). A compositionally biased stretch (basic residues) spans 255 to 275; it reads KGKKTRSNKRTNKFILSHRNK.

This sequence belongs to the universal ribosomal protein uL2 family. As to quaternary structure, part of the 50S ribosomal subunit. Forms a bridge to the 30S subunit in the 70S ribosome.

One of the primary rRNA binding proteins. Required for association of the 30S and 50S subunits to form the 70S ribosome, for tRNA binding and peptide bond formation. It has been suggested to have peptidyltransferase activity; this is somewhat controversial. Makes several contacts with the 16S rRNA in the 70S ribosome. In Blochmanniella pennsylvanica (strain BPEN), this protein is Large ribosomal subunit protein uL2.